The primary structure comprises 283 residues: Demethylrebeccamycin-D-glucose O-methyltransferase (283 aa).

Residues S101, Q106, 129–130 (DA), L146, and H151 each bind S-adenosyl-L-methionine.

Belongs to the methyltransferase superfamily. In terms of assembly, monomer.

It carries out the reaction 4'-demethylrebeccamycin + S-adenosyl-L-methionine = rebeccamycin + S-adenosyl-L-homocysteine + H(+). Functionally, glycosyl O-methyltransferase that catalyzes the final step in the biosynthesis of rebeccamycin, an indolocarbazole alkaloid that inhibits topoisomerase 1. Has broad substrate specificity and functions as glycosyl O-methyltransferase on a number of rebeccamycin analogs. The polypeptide is Demethylrebeccamycin-D-glucose O-methyltransferase (rebM) (Lentzea aerocolonigenes (Lechevalieria aerocolonigenes)).